An 842-amino-acid polypeptide reads, in one-letter code: Probable vinculin (842 aa).

Residues 585–679 are a coiled coil; the sequence is KEARKRLDDV…AAEEEERKRA (95 aa).

The protein belongs to the vinculin/alpha-catenin family. As to quaternary structure, monomer. Associates with F-actin. Interacts with aarA, ctxA, ctxB and rgaA. As to expression, epithelium.

It is found in the cytoplasm. Its subcellular location is the cell cortex. It localises to the cell junction. Its function is as follows. Involved in cell adhesion. Thought to play an important role in cytokinesis B, probably by providing substrate adhesion and traction forces. Required to organize and polarize the tip epithelium during cytokinesis. Required for the normal distribution of myosin in the tip epithelium. Involved in the localization of ctxA, ctxB, dcsA, exoc6 and rgaA. Thought to form a complex with ctxA, ctxB, and rgaA which regulates myosin accumulation to the apical plasma membrane. This chain is Probable vinculin (ctnnA), found in Dictyostelium discoideum (Social amoeba).